The chain runs to 179 residues: Large ribosomal subunit protein bL17 (179 aa).

The segment covering 123-161 has biased composition (basic and acidic residues); the sequence is KEKDTKKKDDSKKSDDKKTSKKEAGFKSSKGESEHKKNT. Residues 123–179 form a disordered region; the sequence is KEKDTKKKDDSKKSDDKKTSKKEAGFKSSKGESEHKKNTDQVVDSSSNRRYNRVKGS. The span at 162–171 shows a compositional bias: polar residues; it reads DQVVDSSSNR.

This sequence belongs to the bacterial ribosomal protein bL17 family. In terms of assembly, part of the 50S ribosomal subunit. Contacts protein L32.

This is Large ribosomal subunit protein bL17 from Treponema denticola (strain ATCC 35405 / DSM 14222 / CIP 103919 / JCM 8153 / KCTC 15104).